The following is a 409-amino-acid chain: tRNA-specific 2-thiouridylase MnmA (409 aa).

ATP contacts are provided by residues 43–50 and Leu69; that span reads AMSGGVDS. The Nucleophile role is filled by Cys137. Cys137 and Cys235 are joined by a disulfide. Residue Gly161 coordinates ATP. Residues 185 to 187 form an interaction with tRNA region; that stretch reads KDQ. Cys235 serves as the catalytic Cysteine persulfide intermediate.

It belongs to the MnmA/TRMU family.

It localises to the cytoplasm. The enzyme catalyses S-sulfanyl-L-cysteinyl-[protein] + uridine(34) in tRNA + AH2 + ATP = 2-thiouridine(34) in tRNA + L-cysteinyl-[protein] + A + AMP + diphosphate + H(+). Its function is as follows. Catalyzes the 2-thiolation of uridine at the wobble position (U34) of tRNA, leading to the formation of s(2)U34. The chain is tRNA-specific 2-thiouridylase MnmA from Caulobacter sp. (strain K31).